A 417-amino-acid chain; its full sequence is Phosphoglycerate kinase 2 (417 aa).

Position 4 is a phosphoserine (Ser-4). Lys-11 is subject to N6-acetyllysine. Val-23, Asp-24, Phe-25, Asn-26, Gln-38, and Arg-39 together coordinate (2R)-3-phosphoglycerate. An N6-acetyllysine modification is found at Lys-48. 4 residues coordinate (2R)-3-phosphoglycerate: Ser-62, His-63, Gly-65, and Arg-66. N6-acetyllysine occurs at positions 75, 86, and 97. (2R)-3-phosphoglycerate is bound by residues Leu-122 and Arg-123. N6-acetyllysine is present on residues Lys-131 and Lys-146. (2R)-3-phosphoglycerate-binding residues include His-170 and Arg-171. At Tyr-196 the chain carries Phosphotyrosine. Lys-199 carries the N6-acetyllysine modification. Gly-214 is a binding site for ADP. Gly-214 contributes to the CDP binding site. AMP contacts are provided by Ala-215 and Lys-216. Ala-215 is an ATP binding site. Ala-215 serves as a coordination point for Mg(2+). Asp-219 serves as a coordination point for CDP. Residue Asp-219 participates in Mg(2+) binding. Lys-220 contributes to the AMP binding site. Lys-220 contacts ATP. Position 238 (Gly-238) interacts with ADP. Residue Gly-238 participates in CDP binding. Gly-239 contributes to the AMP binding site. Residue Gly-239 coordinates ATP. Residues Lys-267 and Lys-291 each carry the N6-acetyllysine modification. Gly-313 serves as a coordination point for AMP. Residue Gly-313 coordinates ATP. Residues Gly-338, Ile-340, and Phe-343 each contribute to the CDP site. Residue Phe-343 participates in ADP binding. An AMP-binding site is contributed by Glu-344. ATP contacts are provided by Glu-344, Asp-375, and Thr-376. Asp-375 contributes to the Mg(2+) binding site.

This sequence belongs to the phosphoglycerate kinase family. In terms of assembly, monomer. The cofactor is Mg(2+). In terms of tissue distribution, testis and sperm. Localized on the principle piece in the sperm (at protein level). Testis-specific.

It localises to the cytoplasm. It carries out the reaction (2R)-3-phosphoglycerate + ATP = (2R)-3-phospho-glyceroyl phosphate + ADP. It participates in carbohydrate degradation; glycolysis; pyruvate from D-glyceraldehyde 3-phosphate: step 2/5. Functionally, essential for sperm motility and male fertility but is not required for the completion of spermatogenesis. The polypeptide is Phosphoglycerate kinase 2 (Pgk2) (Mus musculus (Mouse)).